A 259-amino-acid chain; its full sequence is Chloroplastic import inner membrane translocase subunit HP30-2 (259 aa).

A run of 4 helical transmembrane segments spans residues 55–75 (AVVT…MGTL), 108–124 (NFAA…CVMK), 135–155 (AVVA…GLQG), and 158–178 (MNAI…FKLG).

Belongs to the Tim17/Tim22/Tim23 family. As to quaternary structure, probable component of a protein-conducting channel made of HP30-1, HP30-2 and HP20 that mediates the import of transit sequence-less proteins into the chloroplastic inner membrane. Interacts with CEQORH.

The protein resides in the mitochondrion membrane. Its subcellular location is the plastid. It localises to the chloroplast inner membrane. Together with HP30-1 and HP20, triggers the import and insertion of transit sequence-less multi-pass transmembrane proteins (e.g. CEQORH) into the chloroplastic inner membrane. The chain is Chloroplastic import inner membrane translocase subunit HP30-2 from Arabidopsis thaliana (Mouse-ear cress).